A 150-amino-acid polypeptide reads, in one-letter code: UPF0178 protein Bcep18194_A4809 (150 aa).

Belongs to the UPF0178 family.

The chain is UPF0178 protein Bcep18194_A4809 from Burkholderia lata (strain ATCC 17760 / DSM 23089 / LMG 22485 / NCIMB 9086 / R18194 / 383).